The primary structure comprises 308 residues: Ribosomal RNA small subunit methyltransferase H (308 aa).

S-adenosyl-L-methionine contacts are provided by residues Gly33–His35, Asp52, Phe78, Asp99, and Gln106. Residues Glu289–Leu308 form a disordered region.

It belongs to the methyltransferase superfamily. RsmH family.

The protein resides in the cytoplasm. The enzyme catalyses cytidine(1402) in 16S rRNA + S-adenosyl-L-methionine = N(4)-methylcytidine(1402) in 16S rRNA + S-adenosyl-L-homocysteine + H(+). Functionally, specifically methylates the N4 position of cytidine in position 1402 (C1402) of 16S rRNA. The sequence is that of Ribosomal RNA small subunit methyltransferase H from Thermoanaerobacter sp. (strain X514).